A 216-amino-acid polypeptide reads, in one-letter code: MTRNDLLDRLATTQASALETQGLGLVPMVVEQSGRGERAYDIYSRLLKERVVFLVGEVNDQTANLVVAQLLFLESENPDKDISLYINSPGGSVSAGLAIYDTMQFVKPDVQTLCMGMAASMGAFLLAAGAKGKRSALPNSRIMIHQPLGGARGQASDIEIQAREILYLRERLNSILSEVTGQPVEKIARDTDRDNFMSGDQAVDYGLIDKVIARRS.

The active-site Nucleophile is serine 120. The active site involves histidine 145.

This sequence belongs to the peptidase S14 family. Fourteen ClpP subunits assemble into 2 heptameric rings which stack back to back to give a disk-like structure with a central cavity, resembling the structure of eukaryotic proteasomes.

It localises to the cytoplasm. The catalysed reaction is Hydrolysis of proteins to small peptides in the presence of ATP and magnesium. alpha-casein is the usual test substrate. In the absence of ATP, only oligopeptides shorter than five residues are hydrolyzed (such as succinyl-Leu-Tyr-|-NHMec, and Leu-Tyr-Leu-|-Tyr-Trp, in which cleavage of the -Tyr-|-Leu- and -Tyr-|-Trp bonds also occurs).. Cleaves peptides in various proteins in a process that requires ATP hydrolysis. Has a chymotrypsin-like activity. Plays a major role in the degradation of misfolded proteins. The chain is ATP-dependent Clp protease proteolytic subunit from Cupriavidus pinatubonensis (strain JMP 134 / LMG 1197) (Cupriavidus necator (strain JMP 134)).